The primary structure comprises 311 residues: Class E basic helix-loop-helix protein 22 (311 aa).

The tract at residues 22–170 (AKRMESAFRS…GGSKKSKEQK (149 aa)) is disordered. The segment covering 81 to 96 (GESASRSSVAESSGGE) has biased composition (low complexity). Residues 125–147 (AGGGGGGGGGGGGGPGGGGGGGL) show a composition bias toward gly residues. The 55-residue stretch at 171–225 (ALRLNINARERRRMHDLNDALDELRAVIPYAHSPSVRKLSKIATLLLAKNYILMQ) folds into the bHLH domain.

The protein localises to the nucleus. Its function is as follows. May act as a transcriptional repressor. The sequence is that of Class E basic helix-loop-helix protein 22 (BHLHE22) from Gallus gallus (Chicken).